The sequence spans 315 residues: Acetaldehyde dehydrogenase (315 aa).

13 to 16 (SGNI) serves as a coordination point for NAD(+). Cysteine 131 (acyl-thioester intermediate) is an active-site residue. NAD(+) contacts are provided by residues 163 to 171 (SAGPGTRAN) and asparagine 290.

This sequence belongs to the acetaldehyde dehydrogenase family.

The catalysed reaction is acetaldehyde + NAD(+) + CoA = acetyl-CoA + NADH + H(+). This chain is Acetaldehyde dehydrogenase, found in Xanthobacter autotrophicus (strain ATCC BAA-1158 / Py2).